Here is a 126-residue protein sequence, read N- to C-terminus: Holo-[acyl-carrier-protein] synthase (126 aa).

Residues aspartate 9 and glutamate 57 each coordinate Mg(2+).

Belongs to the P-Pant transferase superfamily. AcpS family. Requires Mg(2+) as cofactor.

It is found in the cytoplasm. The catalysed reaction is apo-[ACP] + CoA = holo-[ACP] + adenosine 3',5'-bisphosphate + H(+). Transfers the 4'-phosphopantetheine moiety from coenzyme A to a Ser of acyl-carrier-protein. The chain is Holo-[acyl-carrier-protein] synthase from Alteromonas mediterranea (strain DSM 17117 / CIP 110805 / LMG 28347 / Deep ecotype).